We begin with the raw amino-acid sequence, 425 residues long: Type I restriction enzyme MjaVII specificity subunit (425 aa).

Positions 9–168 (KKTEIGEIPE…KSFKIPLPPL (160 aa)) are target recognition domain 1. Residues 169 to 208 (EEQKQIAKILTKIDEGIEIIEKSINKLERIKKGLMHKLLT) form a central conserved region (CCR) region. Residues 169–208 (EEQKQIAKILTKIDEGIEIIEKSINKLERIKKGLMHKLLT) adopt a coiled-coil conformation. The tract at residues 209–368 (KGIGHSRFKK…TFKELSKSML (160 aa)) is target recognition domain 2. Positions 369 to 418 (ENFKIPLPPLEEQKQIAKILSSVDKSIELKKQKKEKLQRMKKKIMELLLT) form a coiled coil. The segment at 369–418 (ENFKIPLPPLEEQKQIAKILSSVDKSIELKKQKKEKLQRMKKKIMELLLT) is distal conserved region (DCR).

It belongs to the type-I restriction system S methylase family. In terms of assembly, the type I restriction/modification system is composed of three polypeptides R, M and S.

In terms of biological role, the specificity (S) subunit of a type I restriction enzyme; this subunit dictates DNA sequence specificity. The M and S subunits together form a methyltransferase (MTase) that methylates A-3 on the top and bottom strands of the sequence 5'-CAAN(7)TGG-3'. In the presence of the R subunit the complex can also act as an endonuclease, binding to the same target sequence but cutting the DNA some distance from this site. Whether the DNA is cut or modified depends on the methylation state of the target sequence. When the target site is unmodified, the DNA is cut. When the target site is hemimethylated, the complex acts as a maintenance MTase modifying the DNA so that both strands become methylated. After locating a non-methylated recognition site, the enzyme complex serves as a molecular motor that translocates DNA in an ATP-dependent manner until a collision occurs that triggers cleavage. This Methanocaldococcus jannaschii (strain ATCC 43067 / DSM 2661 / JAL-1 / JCM 10045 / NBRC 100440) (Methanococcus jannaschii) protein is Type I restriction enzyme MjaVII specificity subunit.